Here is a 355-residue protein sequence, read N- to C-terminus: Iron deficiency-induced protein A (355 aa).

A signal peptide (tat-type signal) is located at residues 1-34; the sequence is MEKVGRRVFLGMGAAATAYVTHHLWNQNAESSYA. Fe cation contacts are provided by His49, Tyr50, Tyr180, Tyr236, and Tyr237.

It belongs to the bacterial solute-binding protein 1 family. Post-translationally, predicted to be exported by the Tat system. The position of the signal peptide cleavage has not been experimentally proven.

It localises to the cellular thylakoid membrane. Functionally, plays an important role in protecting the acceptor side of photosystem II (PSII) against oxidative damage, especially under iron-limiting growth conditions. Its function is as follows. May also be part of a periplasmic ABC transporter complex involved in iron import. In Thermosynechococcus vestitus (strain NIES-2133 / IAM M-273 / BP-1), this protein is Iron deficiency-induced protein A (idiA).